Reading from the N-terminus, the 473-residue chain is MSAKTLYEKLVESHTIRELDNEGHVLLYIDRSILNEYTSPQAFSGLRERGRAVRHPDTFLLNIDHVNPTRSQRDVLMTDPGGQLQVDYFRENAADFGITLFDVLDPRQGIEHVVAHEQGLVMPGMVIAAGDSHTTTYGAFGALGFGIGTSEIEHLLATQTLVYRKLKTMRVSVQGELPFACSAKDIVLELLERIGADGATGYAIEFVGEAISALSVEGRMTLCNMAVEAGARGAIIAPDKKVFDYIYGKPQMPVGELWQQALLEWSQLSSDADAVFDKTVAINCHDLEPKVTWGISPDQTGSITGRVPFPEQETNPLKRLALEKALHYMGLTAGMLLKDIRISHAFIGSCTNGRIEDLRAVAKVLEGRKIASHVRGIIVPGSTMVRRQAEEEGLAKIFIAAGFEWRQSGCSMCLAMNEDVLSPGDRCASGTNRNFLGRQGAGARTHLMSPAMVAAAAVAGHLVDVRSLLQAGE.

Residues cysteine 350, cysteine 410, and cysteine 413 each coordinate [4Fe-4S] cluster.

Belongs to the aconitase/IPM isomerase family. LeuC type 1 subfamily. Heterodimer of LeuC and LeuD. [4Fe-4S] cluster is required as a cofactor.

The enzyme catalyses (2R,3S)-3-isopropylmalate = (2S)-2-isopropylmalate. It functions in the pathway amino-acid biosynthesis; L-leucine biosynthesis; L-leucine from 3-methyl-2-oxobutanoate: step 2/4. Its function is as follows. Catalyzes the isomerization between 2-isopropylmalate and 3-isopropylmalate, via the formation of 2-isopropylmaleate. In Salmonella choleraesuis (strain SC-B67), this protein is 3-isopropylmalate dehydratase large subunit 2.